The primary structure comprises 339 residues: Adenylosuccinate synthetase (339 aa).

GTP is bound by residues 12 to 18 (GDEGKGS) and 42 to 44 (GHS). The active-site Proton acceptor is the aspartate 13. 2 residues coordinate Mg(2+): aspartate 13 and glycine 42. Residues 13-16 (DEGK), 40-43 (NAGH), threonine 127, arginine 141, glutamine 179, threonine 194, and arginine 256 contribute to the IMP site. Histidine 43 serves as the catalytic Proton donor. 252 to 258 (TVTGRRR) is a substrate binding site. GTP contacts are provided by residues arginine 258, 284–286 (MLD), and 324–326 (KTG).

Belongs to the adenylosuccinate synthetase family. In terms of assembly, homodimer. It depends on Mg(2+) as a cofactor.

It localises to the cytoplasm. The enzyme catalyses IMP + L-aspartate + GTP = N(6)-(1,2-dicarboxyethyl)-AMP + GDP + phosphate + 2 H(+). Its pathway is purine metabolism; AMP biosynthesis via de novo pathway; AMP from IMP: step 1/2. Functionally, plays an important role in the de novo pathway of purine nucleotide biosynthesis. Catalyzes the first committed step in the biosynthesis of AMP from IMP. This Pyrococcus horikoshii (strain ATCC 700860 / DSM 12428 / JCM 9974 / NBRC 100139 / OT-3) protein is Adenylosuccinate synthetase.